The following is a 441-amino-acid chain: N-succinylarginine dihydrolase (441 aa).

Substrate-binding positions include 19–28 (AGLSFGNEAS), N110, and 137–138 (HR). E174 is a catalytic residue. Residue R212 participates in substrate binding. H248 is a catalytic residue. Substrate contacts are provided by D250 and N359. The active-site Nucleophile is C365.

This sequence belongs to the succinylarginine dihydrolase family. In terms of assembly, homodimer.

It catalyses the reaction N(2)-succinyl-L-arginine + 2 H2O + 2 H(+) = N(2)-succinyl-L-ornithine + 2 NH4(+) + CO2. The protein operates within amino-acid degradation; L-arginine degradation via AST pathway; L-glutamate and succinate from L-arginine: step 2/5. In terms of biological role, catalyzes the hydrolysis of N(2)-succinylarginine into N(2)-succinylornithine, ammonia and CO(2). This is N-succinylarginine dihydrolase from Cronobacter sakazakii (strain ATCC BAA-894) (Enterobacter sakazakii).